The sequence spans 209 residues: Zinc finger SWIM domain-containing protein sws1 (209 aa).

Residues 1-30 (MQQGHFTSNSYHSKTLNSSSLPVSSKFSHT) show a composition bias toward polar residues. The segment at 1–33 (MQQGHFTSNSYHSKTLNSSSLPVSSKFSHTNDP) is disordered. Residues 143–203 (TTIDLKYWYC…HILAASILRA (61 aa)) form an SWIM-type zinc finger.

In terms of assembly, interacts with rdl1, rlp1 and srs2.

The protein localises to the cytoplasm. It is found in the nucleus. It localises to the nucleoplasm. Functionally, involved in early stages of the homologous recombination repair (HRR) pathway of double-stranded DNA breaks arising during DNA replication or induced by DNA-damaging agents. The polypeptide is Zinc finger SWIM domain-containing protein sws1 (sws1) (Schizosaccharomyces pombe (strain 972 / ATCC 24843) (Fission yeast)).